A 79-amino-acid polypeptide reads, in one-letter code: MSNSDLNIERINELAKKKKEVGLTQEEAKEQTALRKAYLESFRKGFKQQIENTKVIDPEGNDVTPEKIKEIQQKRDNKN.

The tract at residues 56-79 is disordered; it reads IDPEGNDVTPEKIKEIQQKRDNKN. Residues 64 to 79 are compositionally biased toward basic and acidic residues; it reads TPEKIKEIQQKRDNKN.

This sequence belongs to the UPF0291 family.

It localises to the cytoplasm. The polypeptide is UPF0291 protein SAV1341 (Staphylococcus aureus (strain Mu50 / ATCC 700699)).